We begin with the raw amino-acid sequence, 608 residues long: Probable potassium transport system protein Kup (608 aa).

The next 12 helical transmembrane spans lie at 9–29, 46–66, 99–119, 137–157, 165–185, 213–233, 247–267, 285–305, 337–357, 363–383, 396–416, and 419–439; these read LSGVTLAAIGVVYGDIGTSPL, PAAILGFLSLIFWLLILVVSV, TPVLIILGLIGGSFFYGEVVI, PSLDPYIVPLSVLVLTLLFAI, VGKLFAPIMLTWFLTLAVLGL, TSFFALGAVVLAITGVEALYA, WFVVVLPSLVLNYFGQGALLL, ALLPLLVLATMATVIASQAVI, IYIPVINWILYISVVIVIMSF, LAAAYGIAVTGTMVLTSILFC, LVAALFALLLAIDVPLFAANL, and IFSGGWLPLTLGAVMFTLMTS.

This sequence belongs to the HAK/KUP transporter (TC 2.A.72) family.

It is found in the cell inner membrane. The catalysed reaction is K(+)(in) + H(+)(in) = K(+)(out) + H(+)(out). Functionally, transport of potassium into the cell. Likely operates as a K(+):H(+) symporter. This chain is Probable potassium transport system protein Kup, found in Aeromonas salmonicida (strain A449).